The primary structure comprises 361 residues: MSLLPETKLDVLLAHHASLENQLQSQVGADTYVKLMRELAELNPLIEAVKAYRQVGAERGEIDALLADAATDAEMRAMAEAEHAALEAQEAELAQQIRVALLPKDAMDDRNVMLEIRAGTGGDEASLFAGDLFRMYEKFAVLQGWSVEVVSASEGTMGGYKEIIAEVKGRGAFAKLKFESGVHRVQRVPDTETQGRIHTSAATVAVLPEVEEVDVDIKPDDLRIETMRAQGAGGQHVNKTESAIRITHIPTGLQVMMQDSRSQHKNRASAMNILRSRIYDAEQQRIDSVRSAERKEKVGSGDRSERIRTYNFPQGRVTDHRINLTLYKLPQVIAGEALGELIDALTTEHQAAQLAAQGNAA.

At Gln-235 the chain carries N5-methylglutamine.

This sequence belongs to the prokaryotic/mitochondrial release factor family. In terms of processing, methylated by PrmC. Methylation increases the termination efficiency of RF1.

Its subcellular location is the cytoplasm. In terms of biological role, peptide chain release factor 1 directs the termination of translation in response to the peptide chain termination codons UAG and UAA. The sequence is that of Peptide chain release factor 1 from Rhodopseudomonas palustris (strain BisB18).